A 102-amino-acid chain; its full sequence is MVIGLSHYLTVSAILFTLGVFGIFLNRKNVIVILMSVELILLSVNINMVAFSHFLNDIVGQVFALFILTVAAAEAAIGLAILVVFYRNRGSIAVEDVNMMKG.

A run of 3 helical transmembrane segments spans residues 5–25 (LSHY…GIFL), 31–51 (IVIL…MVAF), and 65–85 (LFIL…LVVF).

The protein belongs to the complex I subunit 4L family. In terms of assembly, NDH-1 is composed of 14 different subunits. Subunits NuoA, H, J, K, L, M, N constitute the membrane sector of the complex.

It localises to the cell inner membrane. The enzyme catalyses a quinone + NADH + 5 H(+)(in) = a quinol + NAD(+) + 4 H(+)(out). Functionally, NDH-1 shuttles electrons from NADH, via FMN and iron-sulfur (Fe-S) centers, to quinones in the respiratory chain. The immediate electron acceptor for the enzyme in this species is believed to be ubiquinone. Couples the redox reaction to proton translocation (for every two electrons transferred, four hydrogen ions are translocated across the cytoplasmic membrane), and thus conserves the redox energy in a proton gradient. The protein is NADH-quinone oxidoreductase subunit K 1 of Rhizobium etli (strain CIAT 652).